Reading from the N-terminus, the 31-residue chain is Cytochrome b6-f complex subunit 6 (31 aa).

Residues 3–23 (VFLGYIIFLAAFFGLATGLFL) traverse the membrane as a helical segment.

Belongs to the PetL family. In terms of assembly, the 4 large subunits of the cytochrome b6-f complex are cytochrome b6, subunit IV (17 kDa polypeptide, PetD), cytochrome f and the Rieske protein, while the 4 small subunits are PetG, PetL, PetM and PetN. The complex functions as a dimer.

The protein resides in the plastid. Its subcellular location is the chloroplast thylakoid membrane. Component of the cytochrome b6-f complex, which mediates electron transfer between photosystem II (PSII) and photosystem I (PSI), cyclic electron flow around PSI, and state transitions. PetL is important for photoautotrophic growth as well as for electron transfer efficiency and stability of the cytochrome b6-f complex. This Pyropia yezoensis (Susabi-nori) protein is Cytochrome b6-f complex subunit 6.